Here is a 358-residue protein sequence, read N- to C-terminus: Uroporphyrinogen decarboxylase (358 aa).

Residues 36 to 40 (RQAGR), Asp85, Tyr160, Ser215, and His338 each bind substrate.

The protein belongs to the uroporphyrinogen decarboxylase family. As to quaternary structure, homodimer.

The protein resides in the cytoplasm. It carries out the reaction uroporphyrinogen III + 4 H(+) = coproporphyrinogen III + 4 CO2. Its pathway is porphyrin-containing compound metabolism; protoporphyrin-IX biosynthesis; coproporphyrinogen-III from 5-aminolevulinate: step 4/4. Its function is as follows. Catalyzes the decarboxylation of four acetate groups of uroporphyrinogen-III to yield coproporphyrinogen-III. In Corynebacterium glutamicum (strain R), this protein is Uroporphyrinogen decarboxylase.